Here is a 212-residue protein sequence, read N- to C-terminus: Glycerol-3-phosphate acyltransferase (212 aa).

6 helical membrane passes run 8 to 28 (IFLSAALIALAYLIGSIPFAV), 59 to 79 (AAAALTLLGDAFKGWFALWLA), 90 to 110 (VFALVALAAFLGHLYPVFLGF), 122 to 142 (ILLAIHPGLALATAATWVIIA), 148 to 168 (SSLAALVAAFFAPVYYLFGSG), and 169 to 189 (VAWYAQGPVGVALAIITLLLF).

The protein belongs to the PlsY family. In terms of assembly, probably interacts with PlsX.

The protein localises to the cell inner membrane. It carries out the reaction an acyl phosphate + sn-glycerol 3-phosphate = a 1-acyl-sn-glycero-3-phosphate + phosphate. Its pathway is lipid metabolism; phospholipid metabolism. In terms of biological role, catalyzes the transfer of an acyl group from acyl-phosphate (acyl-PO(4)) to glycerol-3-phosphate (G3P) to form lysophosphatidic acid (LPA). This enzyme utilizes acyl-phosphate as fatty acyl donor, but not acyl-CoA or acyl-ACP. The sequence is that of Glycerol-3-phosphate acyltransferase from Bordetella petrii (strain ATCC BAA-461 / DSM 12804 / CCUG 43448).